A 210-amino-acid chain; its full sequence is Calaxin (210 aa).

EF-hand domains follow at residues 64-99 (TDDM…FLRG), 100-135 (TLDE…SLIR), and 145-180 (GIKD…ENLL). Ca(2+) is bound by residues D77, D79, D81, Y83, E88, D113, N115, D117, Y119, E124, D158, D160, D162, R164, and D169.

As to quaternary structure, component of the outer dynein arm-docking complex along with ODAD1, ODAD2, ODAD3 and ODAD4.

The protein resides in the cytoplasm. It localises to the cytoskeleton. It is found in the cilium axoneme. Its subcellular location is the cell projection. The protein localises to the cilium. The protein resides in the flagellum. Functionally, component of the outer dynein arm-docking complex (ODA-DC) that mediates outer dynein arms (ODA) binding onto the doublet microtubule. Seems to regulate the assembly of both ODAs and their axonemal docking complex onto ciliary microtubules. Regulates ciliary and flagellar motility and is required for cilia-driven determination of body laterality. Its function is as follows. Regulates ciliary motility and is required for cilia-driven determination of body laterality. The polypeptide is Calaxin (clxn) (Danio rerio (Zebrafish)).